A 335-amino-acid chain; its full sequence is Phosphate acyltransferase (335 aa).

Belongs to the PlsX family. Homodimer. Probably interacts with PlsY.

Its subcellular location is the cytoplasm. The enzyme catalyses a fatty acyl-[ACP] + phosphate = an acyl phosphate + holo-[ACP]. It functions in the pathway lipid metabolism; phospholipid metabolism. In terms of biological role, catalyzes the reversible formation of acyl-phosphate (acyl-PO(4)) from acyl-[acyl-carrier-protein] (acyl-ACP). This enzyme utilizes acyl-ACP as fatty acyl donor, but not acyl-CoA. The chain is Phosphate acyltransferase from Streptococcus pyogenes serotype M18 (strain MGAS8232).